We begin with the raw amino-acid sequence, 265 residues long: Silaffin-1 (265 aa).

Positions 1 to 19 (MKLTAIFPLLFTAVGYCAA) are cleaved as a signal peptide. The propeptide at 20–107 (QSIADLAAAN…DSEEEELRIL (88 aa)) is acidic. The segment at 37 to 106 (SAQLISADSS…EDSEEEELRI (70 aa)) is disordered. A compositionally biased stretch (low complexity) spans 51–90 (DSSVESVDAASSDVSGSSVESVDVSGSSLESVDVSGSSLE). The span at 91 to 103 (SVDDSSEDSEEEE) shows a compositional bias: acidic residues. Residues 108-140 (SSKKSGSYYSYGTKKSGSYSGYSTKKSASRRIL) form an R1; atypical repeat. Residues 108-257 (SSKKSGSYYS…GSKGSKRRIL (150 aa)) form a 7 X 19 AA repeat of S-S-K-K-S-G-S-Y-S-G-S-K-G-S-K-R-R-[IL]-L region. Lysine 110 bears the N6-poly(methylaminopropyl)lysine mark. Position 111 is an N6,N6-dimethyllysine (lysine 111). Over residues 122 to 133 (KSGSYSGYSTKK) the composition is skewed to low complexity. The interval 122 to 265 (KSGSYSGYST…ILSGGLRGSM (144 aa)) is disordered. Residues 137 to 140 (RRIL) constitute a propeptide that is removed on maturation. One copy of the R2; atypical repeat lies at 141–162 (SSKKSGSYSGYSTKKSGSRRIL). Low complexity predominate over residues 142 to 155 (SKKSGSYSGYSTKK). An N6-poly(methylaminopropyl)lysine modification is found at lysine 143. Lysine 144 carries the post-translational modification N6,N6-dimethyllysine. Position 154 is an N6-poly(methylaminopropyl)lysine (lysine 154). N6,N6-dimethyllysine is present on lysine 155. Residues 159–162 (RRIL) constitute a propeptide that is removed on maturation. Serine 163 and serine 164 each carry phosphoserine. The stretch at 163–181 (SSKKSGSYSGSKGSKRRIL) is one R3 repeat. Residues 164 to 174 (SKKSGSYSGSK) are compositionally biased toward low complexity. The residue at position 165 (lysine 165) is an N6-poly(methylaminopropyl)lysine. Lysine 166 carries the N6,N6-dimethyllysine modification. Serine 167, serine 169, serine 171, and serine 173 each carry phosphoserine. Lysine 174 carries the N6,N6,N6-trimethyl-5-hydroxylysine modification. Serine 176 carries the post-translational modification Phosphoserine. N6-poly(methylaminopropyl)lysine is present on lysine 177. The propeptide occupies 178–181 (RRIL). 2 positions are modified to phosphoserine: serine 182 and serine 183. The stretch at 182–200 (SSKKSGSYSGSKGSKRRNL) is one R4 repeat. The segment covering 183 to 193 (SKKSGSYSGSK) has biased composition (low complexity). Lysine 184 carries the N6-poly(methylaminopropyl)lysine modification. N6,N6-dimethyllysine is present on lysine 185. 4 positions are modified to phosphoserine: serine 186, serine 188, serine 190, and serine 192. The residue at position 193 (lysine 193) is an N6,N6,N6-trimethyl-5-hydroxylysine. A Phosphoserine modification is found at serine 195. Lysine 196 bears the N6-poly(methylaminopropyl)lysine mark. Residues 197-200 (RRNL) constitute a propeptide that is removed on maturation. Phosphoserine is present on residues serine 201 and serine 202. An R5 repeat occupies 201–219 (SSKKSGSYSGSKGSKRRIL). The segment covering 202 to 212 (SKKSGSYSGSK) has biased composition (low complexity). Lysine 203 bears the N6-poly(methylaminopropyl)lysine mark. Lysine 204 carries the post-translational modification N6,N6-dimethyllysine. Phosphoserine is present on residues serine 205, serine 207, serine 209, and serine 211. Position 212 is an N6,N6,N6-trimethyl-5-hydroxylysine (lysine 212). Serine 214 bears the Phosphoserine mark. N6-poly(methylaminopropyl)lysine is present on lysine 215. The propeptide occupies 216-219 (RRIL). 2 positions are modified to phosphoserine: serine 220 and serine 221. One copy of the R6 repeat lies at 220–238 (SSKKSGSYSGSKGSKRRNL). Residues 221 to 231 (SKKSGSYSGSK) are compositionally biased toward low complexity. N6-poly(methylaminopropyl)lysine is present on lysine 222. Position 223 is an N6,N6-dimethyllysine (lysine 223). Phosphoserine is present on residues serine 224, serine 226, serine 228, and serine 230. Residue lysine 231 is modified to N6,N6,N6-trimethyl-5-hydroxylysine. At serine 233 the chain carries Phosphoserine. N6-poly(methylaminopropyl)lysine is present on lysine 234. Residues 235–238 (RRNL) constitute a propeptide that is removed on maturation. Phosphoserine occurs at positions 239 and 240. The stretch at 239 to 257 (SSKKSGSYSGSKGSKRRIL) is one R7 repeat. Positions 240 to 250 (SKKSGSYSGSK) are enriched in low complexity. Lysine 241 is subject to N6-poly(methylaminopropyl)lysine. Lysine 242 carries the post-translational modification N6,N6-dimethyllysine. Phosphoserine occurs at positions 243, 245, 247, and 249. Lysine 250 carries the N6,N6,N6-trimethyl-5-hydroxylysine modification. At serine 252 the chain carries Phosphoserine. Lysine 253 carries the post-translational modification N6-poly(methylaminopropyl)lysine. Positions 254–265 (RRILSGGLRGSM) are excised as a propeptide.

In terms of assembly, silaffin-1A peptides form large aggregates via electrostatic interactions due to intermolecular interactions between the negatively charged phosphate groups and the polyamine moieties. In terms of processing, N6-polymethylaminopropylated. Two lysine residues of each peptide bears 6 to 11 repeats of methyl-propylamine, which gives a possible template for nucleation, and may also control the silica colloid size within the silica deposition vesicle (SDV). Phosphorylated. All serine residues of the Silaffin-1A1 peptide are phosphorylated. Only minor amounts of the Silaffin-1A2 peptide are phosphorylated. Phosphorylation is essential for the activity. It may represent a source of anions required for silica formation of diatoms.

Its function is as follows. Catalyzes the polymerization of silica spheres from a silicilic acid solution. It therefore plays a central role in the formation of silica cell wall of diatoms. The polypeptide is Silaffin-1 (SIL1) (Cylindrotheca fusiformis (Marine diatom)).